Here is a 107-residue protein sequence, read N- to C-terminus: MMKVLVVVALLVTLISYSSSEGIDDLEADELLSLMANEQTRKECIPKHHECTSNKHGCCRGNFFKYKCQCTTVVTQDGEQTERCFCGTPSHHKAAELVVGFGKKIFG.

A signal peptide spans 1–20 (MMKVLVVVALLVTLISYSSS). The propeptide occupies 21-41 (EGIDDLEADELLSLMANEQTR). Disulfide bonds link Cys44/Cys59, Cys51/Cys68, Cys58/Cys86, and Cys70/Cys84.

Belongs to the neurotoxin 19 (CSTX) family. 04 (U1-Lctx) subfamily. As to expression, expressed by the venom gland.

The protein resides in the secreted. The protein is U1-lycotoxin-Ls1n of Lycosa singoriensis (Wolf spider).